The chain runs to 603 residues: Elongation factor 4 (603 aa).

The tr-type G domain occupies 5–187; it reads RHIRNFCIIA…AVVNFVPPPK (183 aa). GTP contacts are provided by residues 17–22 and 134–137; these read DHGKST and NKID.

Belongs to the TRAFAC class translation factor GTPase superfamily. Classic translation factor GTPase family. LepA subfamily.

It localises to the cell membrane. It carries out the reaction GTP + H2O = GDP + phosphate + H(+). In terms of biological role, required for accurate and efficient protein synthesis under certain stress conditions. May act as a fidelity factor of the translation reaction, by catalyzing a one-codon backward translocation of tRNAs on improperly translocated ribosomes. Back-translocation proceeds from a post-translocation (POST) complex to a pre-translocation (PRE) complex, thus giving elongation factor G a second chance to translocate the tRNAs correctly. Binds to ribosomes in a GTP-dependent manner. The protein is Elongation factor 4 of Symbiobacterium thermophilum (strain DSM 24528 / JCM 14929 / IAM 14863 / T).